The primary structure comprises 212 residues: Adenylate kinase (212 aa).

Position 10-15 (10-15 (GAGKGT)) interacts with ATP. The interval 30–59 (STGDMFRAAMANQTEMGVLAKSYIDKGELV) is NMP. AMP-binding positions include Thr31, Arg36, 57–59 (ELV), 86–89 (GYPR), and Gln93. Residues 127 to 159 (GRIIHRVTGETFHKVFNPPVDYKEEDYYQREDD) are LID. Residues Arg128 and 137–138 (TF) contribute to the ATP site. Positions 156 and 167 each coordinate AMP. Gln195 is a binding site for ATP.

Belongs to the adenylate kinase family. Monomer.

It localises to the cytoplasm. The enzyme catalyses AMP + ATP = 2 ADP. The protein operates within purine metabolism; AMP biosynthesis via salvage pathway; AMP from ADP: step 1/1. Catalyzes the reversible transfer of the terminal phosphate group between ATP and AMP. Plays an important role in cellular energy homeostasis and in adenine nucleotide metabolism. The sequence is that of Adenylate kinase from Streptococcus pneumoniae serotype 4 (strain ATCC BAA-334 / TIGR4).